The sequence spans 276 residues: Alpha N-terminal protein methyltransferase 1 (276 aa).

Residues Gly96, Arg101, Glu118 to Val120, Leu149 to Gln150, and Gln165 each bind S-adenosyl-L-methionine.

It belongs to the methyltransferase superfamily. NTM1 family.

It carries out the reaction N-terminal L-alanyl-L-prolyl-L-lysyl-[protein] + 3 S-adenosyl-L-methionine = N-terminal N,N,N-trimethyl-L-alanyl-L-prolyl-L-lysyl-[protein] + 3 S-adenosyl-L-homocysteine + 3 H(+). The catalysed reaction is N-terminal L-seryl-L-prolyl-L-lysyl-[protein] + 3 S-adenosyl-L-methionine = N-terminal N,N,N-trimethyl-L-seryl-L-prolyl-L-lysyl-[protein] + 3 S-adenosyl-L-homocysteine + 3 H(+). It catalyses the reaction N-terminal L-prolyl-L-prolyl-L-lysyl-[protein] + 2 S-adenosyl-L-methionine = N-terminal N,N-dimethyl-L-prolyl-L-prolyl-L-lysyl-[protein] + 2 S-adenosyl-L-homocysteine + 2 H(+). Alpha-N-methyltransferase that methylates the N-terminus of target proteins containing the N-terminal motif [Ala/Pro/Ser]-Pro-Lys when the initiator Met is cleaved. Specifically catalyzes mono-, di- or tri-methylation of exposed alpha-amino group of Ala or Ser residue in the [Ala/Ser]-Pro-Lys motif and mono- or di-methylation of Pro in the Pro-Pro-Lys motif. This Arabidopsis thaliana (Mouse-ear cress) protein is Alpha N-terminal protein methyltransferase 1.